The primary structure comprises 86 residues: UPF0297 protein SERP1181 (86 aa).

Belongs to the UPF0297 family.

This chain is UPF0297 protein SERP1181, found in Staphylococcus epidermidis (strain ATCC 35984 / DSM 28319 / BCRC 17069 / CCUG 31568 / BM 3577 / RP62A).